The primary structure comprises 142 residues: Large ribosomal subunit protein uL13 (142 aa).

Belongs to the universal ribosomal protein uL13 family. In terms of assembly, part of the 50S ribosomal subunit.

Its function is as follows. This protein is one of the early assembly proteins of the 50S ribosomal subunit, although it is not seen to bind rRNA by itself. It is important during the early stages of 50S assembly. The chain is Large ribosomal subunit protein uL13 from Bordetella avium (strain 197N).